We begin with the raw amino-acid sequence, 665 residues long: Methionine--tRNA ligase (665 aa).

Positions 12–22 (YYPSGKLHIGS) match the 'HIGH' region motif. Residues 308–312 (KMSKS) carry the 'KMSKS' region motif. An ATP-binding site is contributed by Lys311. One can recognise a tRNA-binding domain in the interval 562–665 (TFDAVEIRVA…PSVPNGSIIG (104 aa)).

It belongs to the class-I aminoacyl-tRNA synthetase family. MetG type 2B subfamily. In terms of assembly, homodimer.

The protein localises to the cytoplasm. It catalyses the reaction tRNA(Met) + L-methionine + ATP = L-methionyl-tRNA(Met) + AMP + diphosphate. Its function is as follows. Is required not only for elongation of protein synthesis but also for the initiation of all mRNA translation through initiator tRNA(fMet) aminoacylation. The polypeptide is Methionine--tRNA ligase (metG) (Streptococcus pyogenes serotype M6 (strain ATCC BAA-946 / MGAS10394)).